Consider the following 1379-residue polypeptide: ABC multidrug transporter MDR2 (1379 aa).

A helical transmembrane segment spans residues 65–85 (IALIVIGTIAGIGAGIPFPLL). The ABC transmembrane type-1 1 domain occupies 69 to 367 (VIGTIAGIGA…MAPFMHIFAS (299 aa)). N-linked (GlcNAc...) asparagine glycosylation is present at asparagine 97. A run of 5 helical transmembrane segments spans residues 119–139 (VLQV…HTGC), 193–213 (KVGL…VAFL), 215–235 (VATI…MAFG), 301–321 (IQFG…FWQG), and 336–356 (VSVG…FVLS). The ABC transporter 1 domain occupies 403–682 (IELQDVTFNY…DGVYAGMVRL (280 aa)). 438–445 (GTSGSGKS) is a binding site for ATP. N-linked (GlcNAc...) asparagine glycans are attached at residues asparagine 552 and asparagine 633. Residues 738 to 758 (YMPEEADSLPTEPENEKEKPK) are disordered. The next 4 helical transmembrane spans lie at 781–801 (LGLI…VIFG), 820–840 (GMLF…AVIV), 881–901 (LLVA…GTTI), and 920–942 (VIAW…SGVL). An ABC transmembrane type-1 2 domain is found at 781–1068 (LGLITSIMIG…MFALVPDISK (288 aa)). An N-linked (GlcNAc...) asparagine glycan is attached at asparagine 989. A run of 2 helical transmembrane segments spans residues 1008 to 1028 (FWLS…YWWG) and 1032 to 1052 (ILAG…LLFS). Residues 1135–1374 (VQFRNVHFRY…CESYRANVIH (240 aa)) form the ABC transporter 2 domain. An ATP-binding site is contributed by 1170 to 1177 (GPSGSGKS).

Belongs to the ABC transporter superfamily. ABCB family. Multidrug resistance exporter (TC 3.A.1.201) subfamily.

It localises to the cell membrane. Pleiotropic ABC efflux transporter that may be involved in the modulation susceptibility to a wide range of unrelated cytotoxic compounds. This chain is ABC multidrug transporter MDR2, found in Trichophyton interdigitale (strain MR816).